A 435-amino-acid chain; its full sequence is Protein lin-54 (435 aa).

The interval 73 to 136 is disordered; the sequence is DEPIDTSSHR…PASLPRTVQP (64 aa). Residues 102-120 show a composition bias toward polar residues; it reads TPGSSQYTVRNLSNLSGSP. The 116-residue stretch at 173-288 folds into the CRC domain; it reads QRKPCNCTKS…KCKGCQNTET (116 aa). Residues 175 to 188 form a DNA-binding region; it reads KPCNCTKSQCLKLY. Positions 177, 179, 184, 189, 191, 198, 201, 203, and 206 each coordinate Zn(2+). Positions 235 to 250 are linker; sequence IGIARGGITDIERLHQ. Positions 253, 255, 260, 265, 267, 274, 278, 280, and 283 each coordinate Zn(2+). The DNA-binding stretch occupies residues 253-266; the sequence is CHCKKSGCLKNYCE. The disordered stretch occupies residues 415 to 435; sequence LTQDLDAAPTDDIPGPSTSTS.

The protein belongs to the lin-54 family. As to quaternary structure, component of the DRM complex, at least composed of lin-9, lin-35, lin-37, lin-52, lin-53, lin-54- dpl-1 and efl-1.

It localises to the nucleus. It is found in the chromosome. In terms of biological role, synthetic multivulva class B (synMuvB) protein. SynMuvB proteins are required to repress the induction of vulval development by Ras signaling and probably act by forming the multiprotein DRM complex that repress transcription. The polypeptide is Protein lin-54 (Caenorhabditis elegans).